The sequence spans 396 residues: Elongation factor Tu (396 aa).

Residues 10-206 (KPHVNVGTIG…TMDSYIPEPV (197 aa)) form the tr-type G domain. The interval 19–26 (GHVDHGKT) is G1. A GTP-binding site is contributed by 19-26 (GHVDHGKT). T26 is a binding site for Mg(2+). Residues 60–64 (GITIS) form a G2 region. The segment at 81-84 (DCPG) is G3. GTP contacts are provided by residues 81-85 (DCPGH) and 136-139 (NKAD). The interval 136–139 (NKAD) is G4. Residues 174-176 (SAL) are G5.

The protein belongs to the TRAFAC class translation factor GTPase superfamily. Classic translation factor GTPase family. EF-Tu/EF-1A subfamily. Monomer.

The protein resides in the cytoplasm. It catalyses the reaction GTP + H2O = GDP + phosphate + H(+). Functionally, GTP hydrolase that promotes the GTP-dependent binding of aminoacyl-tRNA to the A-site of ribosomes during protein biosynthesis. The polypeptide is Elongation factor Tu (Legionella pneumophila (strain Paris)).